A 286-amino-acid chain; its full sequence is DNA-directed RNA polymerase subunit Rpo3 (286 aa).

This sequence belongs to the archaeal Rpo3/eukaryotic RPB3 RNA polymerase subunit family. Part of the RNA polymerase complex.

The protein localises to the cytoplasm. The enzyme catalyses RNA(n) + a ribonucleoside 5'-triphosphate = RNA(n+1) + diphosphate. DNA-dependent RNA polymerase (RNAP) catalyzes the transcription of DNA into RNA using the four ribonucleoside triphosphates as substrates. The polypeptide is DNA-directed RNA polymerase subunit Rpo3 (Aeropyrum pernix (strain ATCC 700893 / DSM 11879 / JCM 9820 / NBRC 100138 / K1)).